A 174-amino-acid chain; its full sequence is uncharacterized protein (174 aa).

This sequence belongs to the gamma-class carbonic anhydrase family.

This is an uncharacterized protein from Pseudomonas aeruginosa (strain ATCC 15692 / DSM 22644 / CIP 104116 / JCM 14847 / LMG 12228 / 1C / PRS 101 / PAO1).